The primary structure comprises 240 residues: Ubiquinone biosynthesis O-methyltransferase (240 aa).

S-adenosyl-L-methionine contacts are provided by Arg-44, Gly-64, Asp-85, and Met-129.

Belongs to the methyltransferase superfamily. UbiG/COQ3 family.

It carries out the reaction a 3-demethylubiquinol + S-adenosyl-L-methionine = a ubiquinol + S-adenosyl-L-homocysteine + H(+). The enzyme catalyses a 3-(all-trans-polyprenyl)benzene-1,2-diol + S-adenosyl-L-methionine = a 2-methoxy-6-(all-trans-polyprenyl)phenol + S-adenosyl-L-homocysteine + H(+). It participates in cofactor biosynthesis; ubiquinone biosynthesis. In terms of biological role, O-methyltransferase that catalyzes the 2 O-methylation steps in the ubiquinone biosynthetic pathway. The sequence is that of Ubiquinone biosynthesis O-methyltransferase from Photorhabdus laumondii subsp. laumondii (strain DSM 15139 / CIP 105565 / TT01) (Photorhabdus luminescens subsp. laumondii).